The primary structure comprises 193 residues: Protein CURVATURE THYLAKOID 1D, chloroplastic (193 aa).

A chloroplast-targeting transit peptide spans 1–51; it reads MELCTRSTTIITHLPASFNGHGYLAGKSVDRISLPLQRNVASLVLQSRTLR. The Stromal segment spans residues 52 to 117; that stretch reads CSRKFPGETV…NDIKLDSDKT (66 aa). The helical transmembrane segment at 118–138 threads the bilayer; it reads YSILLYGSGAIVALYLTSAIV. The Lumenal portion of the chain corresponds to 139-142; sequence SSLE. A helical membrane pass occupies residues 143 to 163; the sequence is AIPLFPKLMEVVGLGYTLWFT. Residues 164-193 lie on the Stromal side of the membrane; it reads TRYLLFKRNREELKTKVSEIKKQVLGSDSE.

This sequence belongs to the CURT family. In terms of assembly, homo- and heterodimers and trimers.

Its subcellular location is the plastid. The protein resides in the chloroplast thylakoid membrane. Determines thylakoid architecture by inducing membrane curvature. The polypeptide is Protein CURVATURE THYLAKOID 1D, chloroplastic (CURT1D) (Arabidopsis thaliana (Mouse-ear cress)).